Reading from the N-terminus, the 263-residue chain is Endonuclease 8 (263 aa).

The active-site Schiff-base intermediate with DNA is the P2. E3 functions as the Proton donor in the catalytic mechanism. The active-site Proton donor; for beta-elimination activity is K53. Q70, R125, and N169 together coordinate DNA. An FPG-type zinc finger spans residues 229–263 (KVFHRDGESCERCGGIIERTMLSSRPFYWCPHCQR). R253 (proton donor; for delta-elimination activity) is an active-site residue.

Belongs to the FPG family. Zn(2+) is required as a cofactor.

The enzyme catalyses 2'-deoxyribonucleotide-(2'-deoxyribose 5'-phosphate)-2'-deoxyribonucleotide-DNA = a 3'-end 2'-deoxyribonucleotide-(2,3-dehydro-2,3-deoxyribose 5'-phosphate)-DNA + a 5'-end 5'-phospho-2'-deoxyribonucleoside-DNA + H(+). Functionally, involved in base excision repair of DNA damaged by oxidation or by mutagenic agents. Acts as a DNA glycosylase that recognizes and removes damaged bases. Has a preference for oxidized pyrimidines, such as thymine glycol, 5,6-dihydrouracil and 5,6-dihydrothymine. Has AP (apurinic/apyrimidinic) lyase activity and introduces nicks in the DNA strand. Cleaves the DNA backbone by beta-delta elimination to generate a single-strand break at the site of the removed base with both 3'- and 5'-phosphates. This Pectobacterium carotovorum subsp. carotovorum (strain PC1) protein is Endonuclease 8.